A 176-amino-acid chain; its full sequence is 3-hydroxydecanoyl-[acyl-carrier-protein] dehydratase (176 aa).

His75 is a catalytic residue.

Belongs to the thioester dehydratase family. FabA subfamily. Homodimer.

Its subcellular location is the cytoplasm. It carries out the reaction a (3R)-hydroxyacyl-[ACP] = a (2E)-enoyl-[ACP] + H2O. The catalysed reaction is (3R)-hydroxydecanoyl-[ACP] = (2E)-decenoyl-[ACP] + H2O. It catalyses the reaction (2E)-decenoyl-[ACP] = (3Z)-decenoyl-[ACP]. It participates in lipid metabolism; fatty acid biosynthesis. Necessary for the introduction of cis unsaturation into fatty acids. Catalyzes the dehydration of (3R)-3-hydroxydecanoyl-ACP to E-(2)-decenoyl-ACP and then its isomerization to Z-(3)-decenoyl-ACP. Can catalyze the dehydratase reaction for beta-hydroxyacyl-ACPs with saturated chain lengths up to 16:0, being most active on intermediate chain length. In Glaesserella parasuis serovar 5 (strain SH0165) (Haemophilus parasuis), this protein is 3-hydroxydecanoyl-[acyl-carrier-protein] dehydratase.